A 259-amino-acid chain; its full sequence is Chymotrypsin-1 (259 aa).

An N-terminal signal peptide occupies residues 1 to 17; that stretch reads MLRKVFAVVSVLLVVSA. Residues 18–32 constitute a propeptide, activation peptide; that stretch reads AKVTKLVLDDNYVNR. The Peptidase S1 domain maps to 33-255; the sequence is VVGGEVAKNG…YHDWVRTTMA (223 aa). C59 and C75 are disulfide-bonded. Catalysis depends on charge relay system residues H74 and D119. 2 cysteine pairs are disulfide-bonded: C182–C198 and C208–C232. Residue S212 is the Charge relay system of the active site.

The protein belongs to the peptidase S1 family. In terms of tissue distribution, after blood feeding, expression is induced in the midgut epithelium, followed by secretion into the midgut lumen.

The protein resides in the secreted. It catalyses the reaction Preferential cleavage: Tyr-|-Xaa, Trp-|-Xaa, Phe-|-Xaa, Leu-|-Xaa.. This is Chymotrypsin-1 (CHYM1) from Anopheles gambiae (African malaria mosquito).